The sequence spans 345 residues: Variable large protein 23 (345 aa).

The signal sequence occupies residues 1–18; sequence MRKRISAIIMTLFMVLVS. Cys-19 is lipidated: N-palmitoyl cysteine. Cys-19 carries S-diacylglycerol cysteine lipidation.

It belongs to the variable large protein (Vlp) family. Delta subfamily.

The protein resides in the cell outer membrane. Functionally, the Vlp and Vsp proteins are antigenically distinct proteins, only one vlp or vsp gene is transcriptionally active at any one time. Switching between these genes is a mechanism of host immune response evasion. The sequence is that of Variable large protein 23 from Borrelia hermsii.